The following is a 934-amino-acid chain: Phosphoenolpyruvate carboxylase (934 aa).

Active-site residues include His-161 and Lys-593.

This sequence belongs to the PEPCase type 1 family. Mg(2+) serves as cofactor.

The catalysed reaction is oxaloacetate + phosphate = phosphoenolpyruvate + hydrogencarbonate. Its function is as follows. Forms oxaloacetate, a four-carbon dicarboxylic acid source for the tricarboxylic acid cycle. In Mycobacterium leprae (strain TN), this protein is Phosphoenolpyruvate carboxylase (ppc).